A 214-amino-acid chain; its full sequence is Thymidylate kinase (214 aa).

Residue 10-17 (GGEGVGKT) participates in ATP binding.

The protein belongs to the thymidylate kinase family.

The catalysed reaction is dTMP + ATP = dTDP + ADP. Phosphorylation of dTMP to form dTDP in both de novo and salvage pathways of dTTP synthesis. The polypeptide is Thymidylate kinase (Bartonella quintana (strain Toulouse) (Rochalimaea quintana)).